Here is a 267-residue protein sequence, read N- to C-terminus: Putative carboxymethylenebutenolidase (267 aa).

Catalysis depends on residues Cys137, Asp194, and His226.

Belongs to the dienelactone hydrolase family.

The catalysed reaction is 2-(5-oxo-2,5-dihydrofuran-2-ylidene)acetate + H2O = 4-oxohex-2-enedioate + H(+). This is Putative carboxymethylenebutenolidase from Yersinia pestis.